A 62-amino-acid chain; its full sequence is U-myrmeciitoxin(01)-Mg3a (62 aa).

A signal peptide spans 1–24 (MKTTVILLLAIAIIFAIMTTLTSA).

As to expression, expressed by the venom gland.

The protein resides in the secreted. In terms of biological role, may have antimicrobial properties, like most ant linear peptides. This chain is U-myrmeciitoxin(01)-Mg3a, found in Myrmecia gulosa (Red bulldog ant).